The chain runs to 536 residues: Butyrophilin-like protein 9 (536 aa).

The first 35 residues, 1–35, serve as a signal peptide directing secretion; sequence MADFSVFLGFLKQIPRCLSIFFTYLLFLQLWEVNS. Ig-like V-type domains are found at residues 36-149 and 152-241; these read DKVW…WELE and GSGS…KEFV. Residues 36–257 are Extracellular-facing; sequence DKVWVLGPEE…FLPRMSPWKK (222 aa). The cysteines at positions 59 and 133 are disulfide-linked. Asparagine 102, asparagine 139, and asparagine 224 each carry an N-linked (GlcNAc...) asparagine glycan. Cysteine 173 and cysteine 227 form a disulfide bridge. The chain crosses the membrane as a helical span at residues 258 to 278; it reads AFVGTLVVLPLSLIVLTMLAL. The Cytoplasmic segment spans residues 279–536; that stretch reads RYFYKLRSFQ…PAWAVNEAVS (258 aa). The B30.2/SPRY domain occupies 307–506; it reads DWRRSEGQAE…MTICSLPVRG (200 aa).

The protein belongs to the immunoglobulin superfamily. BTN/MOG family.

Its subcellular location is the membrane. The polypeptide is Butyrophilin-like protein 9 (Btnl9) (Mus musculus (Mouse)).